The sequence spans 210 residues: Methylthioribulose-1-phosphate dehydratase (210 aa).

His-97 and His-99 together coordinate Zn(2+).

It belongs to the aldolase class II family. MtnB subfamily. Homotetramer. It depends on Zn(2+) as a cofactor.

It catalyses the reaction 5-(methylsulfanyl)-D-ribulose 1-phosphate = 5-methylsulfanyl-2,3-dioxopentyl phosphate + H2O. The protein operates within amino-acid biosynthesis; L-methionine biosynthesis via salvage pathway; L-methionine from S-methyl-5-thio-alpha-D-ribose 1-phosphate: step 2/6. Catalyzes the dehydration of methylthioribulose-1-phosphate (MTRu-1-P) into 2,3-diketo-5-methylthiopentyl-1-phosphate (DK-MTP-1-P). This chain is Methylthioribulose-1-phosphate dehydratase, found in Geobacillus kaustophilus (strain HTA426).